Here is a 239-residue protein sequence, read N- to C-terminus: Pyridoxine 5'-phosphate synthase (239 aa).

Asn7 serves as a coordination point for 3-amino-2-oxopropyl phosphate. 9-10 contacts 1-deoxy-D-xylulose 5-phosphate; that stretch reads DH. A 3-amino-2-oxopropyl phosphate-binding site is contributed by Arg18. Catalysis depends on His43, which acts as the Proton acceptor. 1-deoxy-D-xylulose 5-phosphate contacts are provided by Arg45 and His50. The active-site Proton acceptor is the Glu70. Residue Thr100 participates in 1-deoxy-D-xylulose 5-phosphate binding. Residue His191 is the Proton donor of the active site. Residues Gly192 and 213–214 contribute to the 3-amino-2-oxopropyl phosphate site; that span reads GH.

This sequence belongs to the PNP synthase family. Homooctamer; tetramer of dimers.

It is found in the cytoplasm. It carries out the reaction 3-amino-2-oxopropyl phosphate + 1-deoxy-D-xylulose 5-phosphate = pyridoxine 5'-phosphate + phosphate + 2 H2O + H(+). Its pathway is cofactor biosynthesis; pyridoxine 5'-phosphate biosynthesis; pyridoxine 5'-phosphate from D-erythrose 4-phosphate: step 5/5. Its function is as follows. Catalyzes the complicated ring closure reaction between the two acyclic compounds 1-deoxy-D-xylulose-5-phosphate (DXP) and 3-amino-2-oxopropyl phosphate (1-amino-acetone-3-phosphate or AAP) to form pyridoxine 5'-phosphate (PNP) and inorganic phosphate. The chain is Pyridoxine 5'-phosphate synthase from Syntrophotalea carbinolica (strain DSM 2380 / NBRC 103641 / GraBd1) (Pelobacter carbinolicus).